The following is a 154-amino-acid chain: Malate dehydrogenase (154 aa).

Arginine 3 and arginine 9 together coordinate substrate. Residues asparagine 16 and isoleucine 39 to asparagine 41 contribute to the NAD(+) site. Positions 41 and 75 each coordinate substrate. Histidine 99 (proton acceptor) is an active-site residue. Position 149 (methionine 149) interacts with NAD(+).

The protein belongs to the LDH/MDH superfamily. MDH type 1 family. As to quaternary structure, homodimer.

The enzyme catalyses (S)-malate + NAD(+) = oxaloacetate + NADH + H(+). Its function is as follows. Catalyzes the reversible oxidation of malate to oxaloacetate. The protein is Malate dehydrogenase (mdh) of Pectobacterium carotovorum subsp. carotovorum (Erwinia carotovora subsp. carotovora).